Consider the following 143-residue polypeptide: Methylglyoxal synthase (143 aa).

Residues 1–143 (MTVKKIALVA…DYEAYRNRII (143 aa)) form the MGS-like domain. Substrate-binding positions include His-11, Lys-15, 37–40 (TGST), and 57–58 (SG). Asp-63 acts as the Proton donor/acceptor in catalysis. His-90 serves as a coordination point for substrate.

Belongs to the methylglyoxal synthase family.

It carries out the reaction dihydroxyacetone phosphate = methylglyoxal + phosphate. Functionally, catalyzes the formation of methylglyoxal from dihydroxyacetone phosphate. This is Methylglyoxal synthase from Coxiella burnetii (strain Dugway 5J108-111).